The chain runs to 484 residues: Monocarboxylate transporter 2 (484 aa).

Residues 1 to 16 (MPSETAVPPPHPIPPD) are Cytoplasmic-facing. A helical transmembrane segment spans residues 17–37 (GGWGWVVVGAAFISIGFSYAF). Residues 38-60 (PKAVTVFFKDIQQIFQASYSEIA) lie on the Extracellular side of the membrane. A helical transmembrane segment spans residues 61-81 (WISSIMLAVMYAGGPISSVLV). Topologically, residues 82–87 (NNYGSR) are cytoplasmic. A helical membrane pass occupies residues 88-108 (PVVIIGGLLCCTGMILASFSN). Residues 109 to 116 (SVLELYLT) are Extracellular-facing. A helical transmembrane segment spans residues 117-137 (IGFIGGLGLAFNLQPALTIIG). Over 138-144 (KYFYRRR) the chain is Cytoplasmic. The helical transmembrane segment at 145 to 165 (PMANGLAMAGSPVFLSSLAPF) threads the bilayer. Residues 166–174 (NQYLFNSYG) lie on the Extracellular side of the membrane. A helical transmembrane segment spans residues 175–195 (WKGSFLILGGIFLHSCVAGCL). Residues 196–245 (MRPVQTSPRKSKSKSKVGSRQDGSMKKASKVSTAEKINRFLDFSLFKHRG) lie on the Cytoplasmic side of the membrane. A disordered region spans residues 201–224 (TSPRKSKSKSKVGSRQDGSMKKAS). A helical membrane pass occupies residues 246 to 266 (FLIYLSGNVIMFLGFFAPIIF). Over 267–282 (LAPYAKDKGVDEYNAA) the chain is Extracellular. Residues 283-303 (LLLSVMAFVDMFARPTGGLIA) form a helical membrane-spanning segment. At 304–311 (NSKLIRPR) the chain is on the cytoplasmic side. Residues 312–332 (IQYFFSFAIVFTGICHLLCPL) traverse the membrane as a helical segment. The Extracellular portion of the chain corresponds to 333–337 (ADTYP). A helical membrane pass occupies residues 338–358 (ALVVYSIFFGYGFGSVSSVLF). The Cytoplasmic segment spans residues 359 to 372 (ETLMDLVGPARFSS). The chain crosses the membrane as a helical span at residues 373–393 (AVGLATIVECCPVLLGPPLAG). Residues 394-405 (KLVDKTKDYKYM) are Extracellular-facing. Residues 406–426 (YIASGTIVVISGIYLFIGNAI) form a helical membrane-spanning segment. The Cytoplasmic segment spans residues 427–484 (NYRLLAKERKREKARKKKSATHPSRESEALSRSKQDDVSVKVSNPHNSPSDRERESNI). The tract at residues 437–484 (REKARKKKSATHPSRESEALSRSKQDDVSVKVSNPHNSPSDRERESNI) is disordered. 2 stretches are compositionally biased toward basic and acidic residues: residues 449–465 (PSRE…DDVS) and 475–484 (PSDRERESNI).

It belongs to the major facilitator superfamily. Monocarboxylate porter (TC 2.A.1.13) family. Homodimer. Interacts with GRID2IP. Interacts with EMB; interaction mediates SLC16A7 targeting to the plasma membrane. Interacts with isoform 2 of BSG. Abundant on the surface of hepatocytes. Present on parietal cells of the oxyntic gland of the stomach, on the basolateral surface of epithelial cells in the collecting ducts of the kidney, on sperm tails throughout the epididymis. Expressed in mitochondria-rich skeletal muscle fibers and cardiac myocytes (at protein level).

Its subcellular location is the cell membrane. It is found in the basolateral cell membrane. The protein localises to the cytoplasm. The catalysed reaction is pyruvate(out) + H(+)(out) = pyruvate(in) + H(+)(in). It carries out the reaction 3-methyl-2-oxobutanoate(out) + H(+)(out) = 3-methyl-2-oxobutanoate(in) + H(+)(in). The enzyme catalyses (S)-lactate(in) + H(+)(in) = (S)-lactate(out) + H(+)(out). It catalyses the reaction acetoacetate(out) + H(+)(out) = acetoacetate(in) + H(+)(in). The catalysed reaction is (R)-3-hydroxybutanoate(out) + H(+)(out) = (R)-3-hydroxybutanoate(in) + H(+)(in). It carries out the reaction 4-methyl-2-oxopentanoate(out) + H(+)(out) = 4-methyl-2-oxopentanoate(in) + H(+)(in). The enzyme catalyses (S)-3-hydroxybutanoate(out) + H(+)(out) = (S)-3-hydroxybutanoate(in) + H(+)(in). Transport activity exhibits steep dependence on substrate concentration. Substrate concentration sensitivity of SLC16A7 arises from the strong inter-subunit cooperativity of the SLC16A7 dimer during transport. Inhibited by AR-C155858. Proton-coupled monocarboxylate symporter. Catalyzes the rapid transport across the plasma membrane of monocarboxylates such as L-lactate, pyruvate and ketone bodies, acetoacetate, beta-hydroxybutyrate and acetate. Dimerization is functionally required and both subunits work cooperatively in transporting substrate. This Mesocricetus auratus (Golden hamster) protein is Monocarboxylate transporter 2 (SLC16A7).